Reading from the N-terminus, the 369-residue chain is tRNA/tmRNA (uracil-C(5))-methyltransferase (369 aa).

Residues glutamine 190, tyrosine 218, asparagine 223, glutamate 239, and aspartate 301 each coordinate S-adenosyl-L-methionine. Catalysis depends on cysteine 326, which acts as the Nucleophile. The active-site Proton acceptor is the glutamate 360.

It belongs to the class I-like SAM-binding methyltransferase superfamily. RNA M5U methyltransferase family. TrmA subfamily.

The catalysed reaction is uridine(54) in tRNA + S-adenosyl-L-methionine = 5-methyluridine(54) in tRNA + S-adenosyl-L-homocysteine + H(+). It carries out the reaction uridine(341) in tmRNA + S-adenosyl-L-methionine = 5-methyluridine(341) in tmRNA + S-adenosyl-L-homocysteine + H(+). Dual-specificity methyltransferase that catalyzes the formation of 5-methyluridine at position 54 (m5U54) in all tRNAs, and that of position 341 (m5U341) in tmRNA (transfer-mRNA). This chain is tRNA/tmRNA (uracil-C(5))-methyltransferase, found in Vibrio vulnificus (strain CMCP6).